The primary structure comprises 1816 residues: Kinesin-like protein KIF1B (1816 aa).

S2 carries the N-acetylserine modification. Positions 5-354 (SVKVAVRVRP…LRYADRAKQI (350 aa)) constitute a Kinesin motor domain. 97–104 (GQTGAGKS) serves as a coordination point for ATP. Residues 270–350 (NINKSLTTLG…TLSTLRYADR (81 aa)) form an interaction with KIFBP region. The segment at 431–450 (FSTASMGSLTSSPSSCSLNS) is disordered. The span at 432 to 450 (STASMGSLTSSPSSCSLNS) shows a compositional bias: low complexity. Residues 470–512 (GEEAIERLKESEKIIAELNETWEEKLRKTEAIRMEREALLAEM) are a coiled coil. One can recognise an FHA domain in the interval 556–612 (TRVGQADAERRQDIVLSGAHIKEEHCIFRSERNNTGEVIVTLEPCERSETYVNGKRV). A phosphothreonine mark is found at T647 and T652. Residues 672 to 731 (IDMKQEMEKRLQEMEILYKREKEEADLLLEQQRLDYESKLQALQKQVETRSLAAETTEEE) are a coiled coil. 5 positions are modified to phosphoserine: S1054, S1057, S1416, S1454, and S1487. Positions 1550–1570 (STTTFESAITPSESSGYDSAD) are disordered. Phosphoserine is present on residues S1573, S1603, S1610, and S1613. The segment covering 1620 to 1637 (SVSSFSSSTLTPSSTCPS) has biased composition (low complexity). The interval 1620 to 1659 (SVSSFSSSTLTPSSTCPSLVDSRSSSMDQKTPEANSRASS) is disordered. Positions 1640–1659 (DSRSSSMDQKTPEANSRASS) are enriched in polar residues. The region spanning 1701–1799 (VVSKKGYLHF…WLYAFNPLLA (99 aa)) is the PH domain.

The protein belongs to the TRAFAC class myosin-kinesin ATPase superfamily. Kinesin family. Unc-104 subfamily. Monomer. Interacts with KIFBP; positively regulates KIF1B microtubule motor activity. Interacts (via C-terminus end of the kinesin-motor domain) with CHP1; the interaction occurs in a calcium-dependent manner. Interacts with MADD (via death domain); links this isoform of KIF1B to Rab3-carrying vesicles in anterograde synaptic vesicle transport. As to expression, expressed in the brain with lower expression in testis and liver (at protein level). Strongly expressed in the brain and ovary, with lower expression in lung, kidney, uterus, testis and liver. Isoform 2 is expressed in non-neuronal tissues.

It localises to the cytoplasm. The protein resides in the cytoskeleton. Its subcellular location is the cytoplasmic vesicle. It is found in the secretory vesicle. The protein localises to the synaptic vesicle membrane. It localises to the lysosome. The catalysed reaction is ATP + H2O + a kinesin associated with a microtubule at position (n) = ADP + phosphate a kinesin associated with a microtubule at position (n+1, toward the plus end).. Has a plus-end-directed microtubule motor activity and functions as a motor for transport of vesicles and organelles along microtubules. In terms of biological role, has a plus-end-directed microtubule motor activity and functions as a motor for anterograde synaptic vesicle transport along axonal microtubules from the cell body to the presynapse in neuronal cells. Its function is as follows. Has a plus-end-directed microtubule motor activity and functions as a motor for the translocation of lysosomes from perinuclear regions to the cell periphery. This chain is Kinesin-like protein KIF1B, found in Rattus norvegicus (Rat).